Reading from the N-terminus, the 165-residue chain is Probable chemoreceptor glutamine deamidase CheD (165 aa).

This sequence belongs to the CheD family.

The catalysed reaction is L-glutaminyl-[protein] + H2O = L-glutamyl-[protein] + NH4(+). Functionally, probably deamidates glutamine residues to glutamate on methyl-accepting chemotaxis receptors (MCPs), playing an important role in chemotaxis. This chain is Probable chemoreceptor glutamine deamidase CheD, found in Geobacillus kaustophilus (strain HTA426).